A 355-amino-acid polypeptide reads, in one-letter code: Protein RecA (355 aa).

Residue 72–79 coordinates ATP; the sequence is GPESSGKT.

This sequence belongs to the RecA family.

It localises to the cytoplasm. Functionally, can catalyze the hydrolysis of ATP in the presence of single-stranded DNA, the ATP-dependent uptake of single-stranded DNA by duplex DNA, and the ATP-dependent hybridization of homologous single-stranded DNAs. It interacts with LexA causing its activation and leading to its autocatalytic cleavage. This is Protein RecA from Wolbachia sp. subsp. Brugia malayi (strain TRS).